A 189-amino-acid chain; its full sequence is Dual specificity phosphatase 21 (189 aa).

Residues 20 to 161 (GLSQITASLF…LIHYEFKLFS (142 aa)) form the Tyrosine-protein phosphatase domain. Positions 43–128 (SNNHITTIIN…YLMKYHNMTL (86 aa)) are sufficient for mitochondrial localization. C105 serves as the catalytic Phosphocysteine intermediate.

Belongs to the protein-tyrosine phosphatase family. Non-receptor class dual specificity subfamily. Microtubule inner protein component of sperm flagellar doublet microtubules. As to expression, selectively expressed in testis.

Its subcellular location is the cytoplasm. It is found in the nucleus. It localises to the mitochondrion inner membrane. The protein localises to the cytoskeleton. The protein resides in the flagellum axoneme. It catalyses the reaction O-phospho-L-tyrosyl-[protein] + H2O = L-tyrosyl-[protein] + phosphate. The catalysed reaction is O-phospho-L-seryl-[protein] + H2O = L-seryl-[protein] + phosphate. The enzyme catalyses O-phospho-L-threonyl-[protein] + H2O = L-threonyl-[protein] + phosphate. Its function is as follows. Protein phosphatase component of the sperm flagellar doublet microtubules. May act as a regulator of sperm motility by mediating dephosphorylation of sperm doublet microtubule proteins. Can dephosphorylate single and diphosphorylated synthetic MAPK peptides, with preference for the phosphotyrosine and diphosphorylated forms over phosphothreonine. This is Dual specificity phosphatase 21 from Mus musculus (Mouse).